The primary structure comprises 255 residues: Homeobox-leucine zipper protein ATHB-23 (255 aa).

The segment at residues 68-127 is a DNA-binding region (homeobox); sequence MGEKKRRLNMEQLKALEKDFELGNKLESDRKLELARALGLQPRQIAIWFQNRRARSKTKQ. Residues 128 to 163 form a leucine-zipper region; the sequence is LEKDYDMLKRQFESLRDENEVLQTQNQKLQAQVMAL.

Belongs to the HD-ZIP homeobox family. Class I subfamily. As to expression, expressed in young leaves, in the adaxial domain of leaf primordia and the rib meristem. Expressed in the styles of flowers and siliques.

The protein resides in the nucleus. Probable transcription factor. The sequence is that of Homeobox-leucine zipper protein ATHB-23 (ATHB-23) from Arabidopsis thaliana (Mouse-ear cress).